The sequence spans 45 residues: Conotoxin reg3.12 (45 aa).

A propeptide spanning residues 1-31 is cleaved from the precursor; sequence DQPVERHAGNKRHLNPTIRRAMIIDANRREK. Cystine bridges form between Cys-32/Cys-44, Cys-33/Cys-42, and Cys-38/Cys-45.

It belongs to the conotoxin M superfamily. As to expression, expressed by the venom duct.

The protein localises to the secreted. This Conus regius (Crown cone) protein is Conotoxin reg3.12.